The chain runs to 197 residues: Glycerol-3-phosphate acyltransferase (197 aa).

A run of 5 helical transmembrane segments spans residues 2–22 (LDVI…AIVV), 53–73 (AGIT…LAWL), 78–98 (PVVA…PVYF), 112–132 (VILA…LAVA), and 152–174 (YMLW…AAIV).

Belongs to the PlsY family. In terms of assembly, probably interacts with PlsX.

The protein resides in the cell inner membrane. The catalysed reaction is an acyl phosphate + sn-glycerol 3-phosphate = a 1-acyl-sn-glycero-3-phosphate + phosphate. Its pathway is lipid metabolism; phospholipid metabolism. Its function is as follows. Catalyzes the transfer of an acyl group from acyl-phosphate (acyl-PO(4)) to glycerol-3-phosphate (G3P) to form lysophosphatidic acid (LPA). This enzyme utilizes acyl-phosphate as fatty acyl donor, but not acyl-CoA or acyl-ACP. The chain is Glycerol-3-phosphate acyltransferase from Halorhodospira halophila (strain DSM 244 / SL1) (Ectothiorhodospira halophila (strain DSM 244 / SL1)).